We begin with the raw amino-acid sequence, 183 residues long: MTATAQQLEYLKNSIKSIQDYPKPGILFRDVTSLLEDPKAYALSIDLLVERYKNAGITKVVGTEARGFLFGAPVALGLGVGFVPVRKPGKLPRETISETYDLEYGTDQLEIHVDAIKPGDKVLVVDDLLATGGTIEATVKLIRRLGGEVTDAAFIINLFDLGGEQRLEKQGITSYSLVPFPGH.

It belongs to the purine/pyrimidine phosphoribosyltransferase family. In terms of assembly, homodimer.

It is found in the cytoplasm. It carries out the reaction AMP + diphosphate = 5-phospho-alpha-D-ribose 1-diphosphate + adenine. The protein operates within purine metabolism; AMP biosynthesis via salvage pathway; AMP from adenine: step 1/1. Catalyzes a salvage reaction resulting in the formation of AMP, that is energically less costly than de novo synthesis. The protein is Adenine phosphoribosyltransferase of Escherichia fergusonii (strain ATCC 35469 / DSM 13698 / CCUG 18766 / IAM 14443 / JCM 21226 / LMG 7866 / NBRC 102419 / NCTC 12128 / CDC 0568-73).